The chain runs to 737 residues: Serine/threonine-protein kinase dst1 (737 aa).

Residues 29–281 (YHIQERLGKG…AKELLNHEFI (253 aa)) enclose the Protein kinase domain. Residues 35–43 (LGKGSFGQV) and Lys58 each bind ATP. Asp149 serves as the catalytic Proton acceptor. 4 disordered regions span residues 305-356 (SMFE…SNNY), 372-475 (KDDA…TTDQ), 491-559 (KPIT…ISNN), and 575-631 (NNNI…ESLS). Composition is skewed to low complexity over residues 334-345 (NNNTVTNYSTVI), 401-410 (SSCSSSSSSS), 425-444 (PITNSPKISPISSNNINKIP), and 454-473 (ATTTTTTTTTTTTTAASTTT). The segment covering 491 to 503 (KPITSSNSTSVTP) has biased composition (polar residues). The span at 510–525 (SNNTTTTSNINTPIKP) shows a compositional bias: low complexity. 2 stretches are compositionally biased toward polar residues: residues 529 to 554 (LKKSNSNTPVQLKTSGDKTPTTTPLK) and 585 to 596 (SPTTGQKIIKTN). The segment covering 597-615 (SGGVLKSSGGLSSKRSPSS) has biased composition (low complexity).

The protein belongs to the protein kinase superfamily. STE Ser/Thr protein kinase family. STE20 subfamily. It depends on Mg(2+) as a cofactor.

The catalysed reaction is L-seryl-[protein] + ATP = O-phospho-L-seryl-[protein] + ADP + H(+). It carries out the reaction L-threonyl-[protein] + ATP = O-phospho-L-threonyl-[protein] + ADP + H(+). The protein is Serine/threonine-protein kinase dst1 of Dictyostelium discoideum (Social amoeba).